We begin with the raw amino-acid sequence, 237 residues long: Class B acid phosphatase (237 aa).

Positions 1 to 23 (MKKITLALSAVCLLFTLNHSANA) are cleaved as a signal peptide. The active-site Nucleophile is the aspartate 69. The Mg(2+) site is built by aspartate 69 and aspartate 71. Residue aspartate 71 is the Proton donor of the active site. Substrate is bound by residues 137–138 (TG) and lysine 177. Aspartate 192 lines the Mg(2+) pocket.

The protein belongs to the class B bacterial acid phosphatase family. In terms of assembly, homotetramer. Mg(2+) serves as cofactor.

It localises to the periplasm. It carries out the reaction a phosphate monoester + H2O = an alcohol + phosphate. Its activity is regulated as follows. Nucleosides, and particularly 2'-deoxyribonucleosides, are potent inhibitors of the phosphatase activity. The phosphatase activity is also inhibited by inorganic phosphate and EDTA in vitro. Dephosphorylates several organic phosphate monoesters such as 3'-UMP, 5'-UMP and pNPP. Also has a phosphotransferase activity catalyzing the transfer of low-energy phosphate groups from organic phosphate monoesters to free hydroxyl groups of various organic compounds such as the 2'-, 3-, or 5'-hydroxyls of nucleosides and nucleotides. Also displays significant phosphomutase activity since it is able to catalyze the transfer of the phosphate group of 3'-AMP from the 3'-position both to the 2'- and 5'-positions. One of the physiological functions of the phosphohydrolytic activity of the enzyme is believed to be the scavenging of organic phosphate esters that otherwise cannot pass the cytoplasmic membrane. The protein is Class B acid phosphatase (aphA) of Salmonella typhimurium (strain LT2 / SGSC1412 / ATCC 700720).